Reading from the N-terminus, the 279-residue chain is NAD kinase (279 aa).

Aspartate 57 serves as the catalytic Proton acceptor. Residues 57 to 58 (DG), 133 to 134 (NE), arginine 159, aspartate 161, and 172 to 177 (TAYNKS) each bind NAD(+).

Belongs to the NAD kinase family. Requires a divalent metal cation as cofactor.

It localises to the cytoplasm. The enzyme catalyses NAD(+) + ATP = ADP + NADP(+) + H(+). Functionally, involved in the regulation of the intracellular balance of NAD and NADP, and is a key enzyme in the biosynthesis of NADP. Catalyzes specifically the phosphorylation on 2'-hydroxyl of the adenosine moiety of NAD to yield NADP. The chain is NAD kinase from Streptococcus pyogenes serotype M2 (strain MGAS10270).